Consider the following 231-residue polypeptide: Probable glutathione S-transferase GSTU1 (231 aa).

In terms of domain architecture, GST N-terminal spans 5 to 84 (KELVLLDFWV…YLDDAFPGTP (80 aa)). Glutathione-binding positions include Ser15, Lys42, Ile56, and 68–69 (ES). The GST C-terminal domain occupies 97 to 220 (AAYARATARF…LPSPEKVYDF (124 aa)).

The protein belongs to the GST superfamily. Tau family.

It catalyses the reaction RX + glutathione = an S-substituted glutathione + a halide anion + H(+). In terms of biological role, conjugation of reduced glutathione to a wide number of exogenous and endogenous hydrophobic electrophiles. The protein is Probable glutathione S-transferase GSTU1 (GSTU1) of Oryza sativa subsp. japonica (Rice).